We begin with the raw amino-acid sequence, 108 residues long: MMKNQLAGLMKQAQAMQDNMKKMQDQLASIEVEGQSGAGLVKVVMSCKNDVKRVSIDPSLLADDKDMLEDLVAAAFNDAVRKAEATSQEKMSGVTAGMPLPPGFKMPF.

The protein belongs to the YbaB/EbfC family. In terms of assembly, homodimer.

The protein localises to the cytoplasm. It localises to the nucleoid. In terms of biological role, binds to DNA and alters its conformation. May be involved in regulation of gene expression, nucleoid organization and DNA protection. This Janthinobacterium sp. (strain Marseille) (Minibacterium massiliensis) protein is Nucleoid-associated protein mma_2329.